Here is a 316-residue protein sequence, read N- to C-terminus: Exonuclease DPD1, chloroplastic/mitochondrial (316 aa).

A chloroplast and mitochondrion-targeting transit peptide spans 1–63 (MCISISQVSR…NVSTTTQGSR (63 aa)). Residues 112 to 282 (IVSDLETTGL…SDVLLLSKVF (171 aa)) enclose the Exonuclease domain. The Mg(2+) site is built by Asp115 and Glu117. The active-site Proton donor/acceptor is the His269. Asp274 provides a ligand contact to Mg(2+).

Belongs to the exonuclease superfamily. TREX family. Mg(2+) serves as cofactor. As to expression, highly expressed in mature pollen grains. Detected in flowers, senescing leaves and roots.

Its subcellular location is the plastid. It localises to the chloroplast. It is found in the mitochondrion. Its activity is regulated as follows. Inhibited by free nucleotide diphosphates (NDPs). In terms of biological role, exonuclease required for organelle DNA degradation during pollen development. Plays non-essential roles in maternal inheritance. May be part of the DNA salvage machinery. This Arabidopsis thaliana (Mouse-ear cress) protein is Exonuclease DPD1, chloroplastic/mitochondrial.